The following is a 318-amino-acid chain: Biotin synthase (318 aa).

The Radical SAM core domain maps to 46–272 (DGVDVEQLNN…RSVVKISGGR (227 aa)). The [4Fe-4S] cluster site is built by Cys61, Cys65, and Cys68. Residues Cys105, Cys138, Cys197, and Lys267 each coordinate [2Fe-2S] cluster.

Belongs to the radical SAM superfamily. Biotin synthase family. As to quaternary structure, homodimer. The cofactor is [4Fe-4S] cluster. [2Fe-2S] cluster serves as cofactor.

It catalyses the reaction (4R,5S)-dethiobiotin + (sulfur carrier)-SH + 2 reduced [2Fe-2S]-[ferredoxin] + 2 S-adenosyl-L-methionine = (sulfur carrier)-H + biotin + 2 5'-deoxyadenosine + 2 L-methionine + 2 oxidized [2Fe-2S]-[ferredoxin]. It participates in cofactor biosynthesis; biotin biosynthesis; biotin from 7,8-diaminononanoate: step 2/2. Its function is as follows. Catalyzes the conversion of dethiobiotin (DTB) to biotin by the insertion of a sulfur atom into dethiobiotin via a radical-based mechanism. This Cenarchaeum symbiosum (strain A) protein is Biotin synthase.